The primary structure comprises 398 residues: Cytochrome b (398 aa).

The helical transmembrane segment at 45 to 65 (LGSIAGIALVIQIITGVILAM) threads the bilayer. Heme b-binding residues include His95 and His109. Transmembrane regions (helical) follow at residues 97-117 (VGASMFFATIYLHIARGLYYG), 129-149 (IGIIIFLIMMATAFMGYVLPW), 164-184 (FSAIPLIGEPIVIWLCGGFSV), 192-212 (FFSLHYLFPFIIVALVILHLL), 245-265 (FVGFGVYFIIFAYFIFYEPNY), 304-324 (LAGVFLMFGSIFVLFLLPWLD), 335-355 (PIYRIAFWIFMADCLFLGYLG), and 364-384 (IIISRFSACYYFCHFLVVLPL). Residues His196 and His210 each coordinate heme b.

Belongs to the cytochrome b family. In terms of assembly, the main subunits of complex b-c1 are: cytochrome b, cytochrome c1 and the Rieske protein. Heme b serves as cofactor.

The protein localises to the cell membrane. Component of the ubiquinol-cytochrome c reductase complex (complex III or cytochrome b-c1 complex), which is a respiratory chain that generates an electrochemical potential coupled to ATP synthesis. This chain is Cytochrome b (petB), found in Rickettsia typhi (strain ATCC VR-144 / Wilmington).